Reading from the N-terminus, the 669-residue chain is 5-taurinomethyluridine-[tRNA] synthase subunit MTO1, mitochondrial (669 aa).

The N-terminal 25 residues, 1–25, are a transit peptide targeting the mitochondrion; that stretch reads MFLLRGRGHWAAASLGRRLPLRRLR. Residues 42–47, valine 154, serine 217, and glutamine 406 contribute to the FAD site; that span reads GGGHAG. Lysine 507 carries the N6-methyllysine modification.

This sequence belongs to the MnmG family. In terms of assembly, homodimer; forms a dimer in the presence of potassium. Interacts with GTPBP3; forms the GTPBP3-MTO1 complex composed of homodimers of GTPBP3 and MTO1. FAD is required as a cofactor. As to expression, ubiquitously expressed in various tissues, but with markedly elevated expression in tissues of high metabolic rates.

Its subcellular location is the mitochondrion. It catalyses the reaction 5,10-methylenetetrahydrofolate + uridine(34) in tRNA + taurine + GTP + A + H2O = 5-taurinomethyluridine(34) in tRNA + 7,8-dihydrofolate + GDP + AH2 + phosphate + H(+). Its function is as follows. Component of the GTPBP3-MTO1 complex that catalyzes the 5-taurinomethyluridine (taum(5)U) modification at the 34th wobble position (U34) of mitochondrial tRNAs (mt-tRNAs), which plays a role in mt-tRNA decoding and mitochondrial translation. Taum(5)U formation on mammalian mt-tRNA requires the presence of both GTPBP3-mediated GTPase activity and MTO1 catalytic activity. The chain is 5-taurinomethyluridine-[tRNA] synthase subunit MTO1, mitochondrial from Mus musculus (Mouse).